The following is a 293-amino-acid chain: Aspartate carbamoyltransferase catalytic subunit (293 aa).

Carbamoyl phosphate is bound by residues Arg-50 and Thr-51. Residue Lys-78 participates in L-aspartate binding. Carbamoyl phosphate is bound by residues Arg-100, His-127, and Gln-130. L-aspartate contacts are provided by Arg-160 and Arg-210. Ala-253 and Pro-254 together coordinate carbamoyl phosphate.

This sequence belongs to the aspartate/ornithine carbamoyltransferase superfamily. ATCase family. Heterododecamer (2C3:3R2) of six catalytic PyrB chains organized as two trimers (C3), and six regulatory PyrI chains organized as three dimers (R2).

The catalysed reaction is carbamoyl phosphate + L-aspartate = N-carbamoyl-L-aspartate + phosphate + H(+). It functions in the pathway pyrimidine metabolism; UMP biosynthesis via de novo pathway; (S)-dihydroorotate from bicarbonate: step 2/3. In terms of biological role, catalyzes the condensation of carbamoyl phosphate and aspartate to form carbamoyl aspartate and inorganic phosphate, the committed step in the de novo pyrimidine nucleotide biosynthesis pathway. This Staphylococcus epidermidis (strain ATCC 35984 / DSM 28319 / BCRC 17069 / CCUG 31568 / BM 3577 / RP62A) protein is Aspartate carbamoyltransferase catalytic subunit.